Consider the following 323-residue polypeptide: NADH-ubiquinone oxidoreductase chain 1 (323 aa).

A run of 8 helical transmembrane segments spans residues 4 to 24, 73 to 93, 106 to 126, 150 to 170, 175 to 195, 226 to 246, 256 to 276, and 303 to 323; these read LFTV…VAFL, YLFF…WNLM, LLLV…SGWA, LALI…TYIM, FSWF…STLA, LFFI…VVIF, LFPL…FLFL, and IGAL…LPLF.

It belongs to the complex I subunit 1 family.

Its subcellular location is the mitochondrion inner membrane. The catalysed reaction is a ubiquinone + NADH + 5 H(+)(in) = a ubiquinol + NAD(+) + 4 H(+)(out). Core subunit of the mitochondrial membrane respiratory chain NADH dehydrogenase (Complex I) that is believed to belong to the minimal assembly required for catalysis. Complex I functions in the transfer of electrons from NADH to the respiratory chain. The immediate electron acceptor for the enzyme is believed to be ubiquinone. The polypeptide is NADH-ubiquinone oxidoreductase chain 1 (ND1) (Paracentrotus lividus (Common sea urchin)).